A 447-amino-acid polypeptide reads, in one-letter code: Tubulin beta-2 chain (447 aa).

GTP-binding residues include Q11, E69, S138, G142, T143, G144, N204, and N226. E69 provides a ligand contact to Mg(2+). The segment at 427-447 is disordered; the sequence is DASISEGEEEYEEEQQLENEE. Residues 432–447 show a composition bias toward acidic residues; it reads EGEEEYEEEQQLENEE.

This sequence belongs to the tubulin family. Dimer of alpha and beta chains. A typical microtubule is a hollow water-filled tube with an outer diameter of 25 nm and an inner diameter of 15 nM. Alpha-beta heterodimers associate head-to-tail to form protofilaments running lengthwise along the microtubule wall with the beta-tubulin subunit facing the microtubule plus end conferring a structural polarity. Microtubules usually have 13 protofilaments but different protofilament numbers can be found in some organisms and specialized cells. Mg(2+) serves as cofactor.

Its subcellular location is the cytoplasm. The protein localises to the cytoskeleton. In terms of biological role, tubulin is the major constituent of microtubules, a cylinder consisting of laterally associated linear protofilaments composed of alpha- and beta-tubulin heterodimers. Microtubules grow by the addition of GTP-tubulin dimers to the microtubule end, where a stabilizing cap forms. Below the cap, tubulin dimers are in GDP-bound state, owing to GTPase activity of alpha-tubulin. The sequence is that of Tubulin beta-2 chain (TUB2) from Erysiphe pisi (Pea powdery mildew).